Consider the following 901-residue polypeptide: Protein translocase subunit SecA (901 aa).

ATP-binding positions include glutamine 87, 105 to 109 (GEGKT), and aspartate 512. Residues cysteine 885, cysteine 887, cysteine 896, and histidine 897 each contribute to the Zn(2+) site.

It belongs to the SecA family. In terms of assembly, monomer and homodimer. Part of the essential Sec protein translocation apparatus which comprises SecA, SecYEG and auxiliary proteins SecDF-YajC and YidC. The cofactor is Zn(2+).

The protein localises to the cell inner membrane. It is found in the cytoplasm. It catalyses the reaction ATP + H2O + cellular proteinSide 1 = ADP + phosphate + cellular proteinSide 2.. Functionally, part of the Sec protein translocase complex. Interacts with the SecYEG preprotein conducting channel. Has a central role in coupling the hydrolysis of ATP to the transfer of proteins into and across the cell membrane, serving both as a receptor for the preprotein-SecB complex and as an ATP-driven molecular motor driving the stepwise translocation of polypeptide chains across the membrane. The sequence is that of Protein translocase subunit SecA from Salmonella schwarzengrund (strain CVM19633).